The chain runs to 463 residues: Glycogen synthase (463 aa).

Position 15 (Lys-15) interacts with ADP-alpha-D-glucose.

This sequence belongs to the glycosyltransferase 1 family. Bacterial/plant glycogen synthase subfamily.

It catalyses the reaction [(1-&gt;4)-alpha-D-glucosyl](n) + ADP-alpha-D-glucose = [(1-&gt;4)-alpha-D-glucosyl](n+1) + ADP + H(+). Its pathway is glycan biosynthesis; glycogen biosynthesis. Its function is as follows. Synthesizes alpha-1,4-glucan chains using ADP-glucose. This Aquifex aeolicus (strain VF5) protein is Glycogen synthase.